Consider the following 294-residue polypeptide: Protoheme IX farnesyltransferase (294 aa).

Helical transmembrane passes span 25-45 (SLVL…MGAV), 48-68 (LVTL…NCYW), 92-112 (AVAL…LALG), 115-135 (VLTA…YTPL), 141-161 (AAML…WTAV), 170-190 (FSLF…IALF), 216-236 (VVLY…LHIA), 240-260 (YLAA…WGFF), and 272-292 (FFFS…DRVP).

Belongs to the UbiA prenyltransferase family. Protoheme IX farnesyltransferase subfamily.

Its subcellular location is the cell inner membrane. The catalysed reaction is heme b + (2E,6E)-farnesyl diphosphate + H2O = Fe(II)-heme o + diphosphate. Its pathway is porphyrin-containing compound metabolism; heme O biosynthesis; heme O from protoheme: step 1/1. Converts heme B (protoheme IX) to heme O by substitution of the vinyl group on carbon 2 of heme B porphyrin ring with a hydroxyethyl farnesyl side group. In Myxococcus xanthus (strain DK1622), this protein is Protoheme IX farnesyltransferase.